Reading from the N-terminus, the 586-residue chain is Kelch-like protein 7 (586 aa).

One can recognise a BTB domain in the interval 44 to 111 (CDVILMVQER…AYTARISVNS (68 aa)). In terms of domain architecture, BACK spans 146–248 (CLGISVLAEC…SKNFLSKTVQ (103 aa)). 6 Kelch repeats span residues 294–336 (RIAL…FWDN), 337–382 (VVYI…AAEG), 383–430 (KIYT…EANG), 431–481 (LIYV…FVKD), 483–528 (IFAV…AVGS), and 530–575 (IYVL…CVVD).

In terms of assembly, homodimer. Component of the BCR(KLHL7) E3 ubiquitin ligase complex, at least composed of CUL3 and KLHL7 and RBX1.

The protein localises to the nucleus. Its subcellular location is the cytoplasm. It participates in protein modification; protein ubiquitination. Its function is as follows. Substrate-specific adapter of a BCR (BTB-CUL3-RBX1) E3 ubiquitin ligase complex. The BCR(KLHL7) complex acts by mediating ubiquitination and subsequent degradation of substrate proteins. Probably mediates 'Lys-48'-linked ubiquitination. The polypeptide is Kelch-like protein 7 (Klhl7) (Rattus norvegicus (Rat)).